The following is a 174-amino-acid chain: Regenerating islet-derived protein 3-gamma (174 aa).

The N-terminal stretch at M1–G26 is a signal peptide. Positions E27–R37 are excised as a propeptide. 3 disulfide bridges follow: C40-C51, C68-C170, and C145-C162. The 125-residue stretch at Y47 to K171 folds into the C-type lectin domain. The segment at W103–G118 is sufficient to activate EXTL3. H107 serves as a coordination point for Zn(2+). The EPN signature appears at E114 to N116. Residues E121 and H144 each coordinate Zn(2+).

Forms a hexameric membrane-permeabilizing oligomeric pore on membrane phospholipids. The hexamer is formed by three dimers related by helical symmetry. Forms filaments, filamentation traps pore complexes and limits damage to host cells. Interacts with EXTL3. In terms of processing, proteolytic processing by trypsin removes an inhibitory N-terminal propeptide and is essential for peptidoglycan binding and antibacterial activity. In terms of tissue distribution, expressed in injured skeletal muscles and sciatic nerve (at protein level). Expressed in the pancreas. Expression increases during the acute phase of pancreatitis.

The protein localises to the secreted. It localises to the cytoplasm. With respect to regulation, lipopolysaccharide inhibits pore-forming activity, explaining why is bactericidal for Gram-positive but not Gram-negative bacteria. Bactericidal C-type lectin which acts exclusively against Gram-positive bacteria and mediates bacterial killing by binding to surface-exposed carbohydrate moieties of peptidoglycan. Restricts bacterial colonization of the intestinal epithelial surface and consequently limits activation of adaptive immune responses by the microbiota. In terms of biological role, acts as a hormone in response to different stimuli like anti-inflammatory signals, such as IL17A, or gut microbiome. Is secreted by different cell types to activate its receptor EXTL3 and induce cell specific signaling pathways. Induced by IL17A in keratinocytes, regulates keratinocyte proliferation and differentiation after skin injury. In parallel, inhibits skin inflammation through the inhibition of inflammatory cytokines such as IL6 and TNF. Induced by IL22 in lung epithelial cells, inhibits cytokine production and regulates allergic airway inflammation. Induced in small intestine by inulin-enriched diet and Lactobacillus gasseri enriched microbiome, plays a role in the improvement of gut barrier function, the regulation of energy balance and glucose levels. Modulates microbiota composition in duodenal contents. Produced by nociceptor in response to endotoxins, prevents endotoxic death by targeting kynurenine pathway in microglia. Functionally, has bacteriostatic activity. Its function is as follows. Has bactericidal activity against L.monocytogenes and methicillin-resistant S.aureus. In Rattus norvegicus (Rat), this protein is Regenerating islet-derived protein 3-gamma.